The following is a 425-amino-acid chain: Calreticulin-1 (425 aa).

An N-terminal signal peptide occupies residues Met-1–Ala-22. Asn-59 carries N-linked (GlcNAc...) asparagine glycosylation. Cysteines 108 and 140 form a disulfide. An alpha-D-glucoside is bound by residues Tyr-112, Lys-114, Tyr-131, and Asp-138. N-linked (GlcNAc...) asparagine glycosylation occurs at Asn-154. 7 repeat units span residues Lys-194 to Leu-205, Asp-213 to Asp-224, Asp-230 to Asp-241, Asp-248 to Asp-259, Gly-263 to Pro-273, Gly-277 to Pro-287, and Gly-291 to Pro-301. Residues Lys-194–Asp-259 form a 4 X approximate repeats region. Composition is skewed to basic and acidic residues over residues Asp-213–Lys-235 and Asp-241–Glu-255. The tract at residues Asp-213–Pro-281 is disordered. The segment at Gly-263–Pro-301 is 3 X approximate repeats. An an alpha-D-glucoside-binding site is contributed by Glu-321. Residues Glu-348–Pro-378 are compositionally biased toward basic and acidic residues. The interval Glu-348–Leu-425 is disordered. Positions Ala-379–Asp-398 are enriched in acidic residues. Phosphoserine is present on residues Ser-381 and Ser-397. The N-linked (GlcNAc...) asparagine glycan is linked to Asn-399. Positions Asn-399–Thr-412 are enriched in basic and acidic residues. Residues His-422–Leu-425 carry the Prevents secretion from ER motif.

It belongs to the calreticulin family.

The protein resides in the endoplasmic reticulum lumen. Its function is as follows. Molecular calcium-binding chaperone promoting folding, oligomeric assembly and quality control in the ER via the calreticulin/calnexin cycle. This lectin may interact transiently with almost all of the monoglucosylated glycoproteins that are synthesized in the ER. The sequence is that of Calreticulin-1 (CRT1) from Arabidopsis thaliana (Mouse-ear cress).